The primary structure comprises 503 residues: Podocalyxin (503 aa).

The signal sequence occupies residues 1–21; it reads MPPTTALSALLLLLLSPASHS. Positions 19–236 are disordered; that stretch reads SHSHNGNETS…PLTSQTPGIT (218 aa). The span at 20-50 shows a compositional bias: polar residues; sequence HSHNGNETSTSAIKSSTVQSHQSATTSTEVT. Residues 22-404 are Extracellular-facing; that stretch reads HNGNETSTSA…PPEVNEDRFS (383 aa). Residues Asn25, Asn89, and Asn94 are each glycosylated (N-linked (GlcNAc...) asparagine). The span at 61 to 91 shows a compositional bias: low complexity; that stretch reads STQPSNPTPFTTSTQSPSMPTSTPNPTSNQS. Residues 107 to 126 show a composition bias toward low complexity; sequence TSSPSSTAFTSSSGQTASSG. Positions 131–183 are enriched in polar residues; that stretch reads DSFTTAPTTTLGLINVSSQPTDLNTTSKLLSTPTTDNTTSPQQPVDSSPSTAS. Asn145, Asn154, Asn167, and Asn206 each carry an N-linked (GlcNAc...) asparagine glycan. The segment covering 196–208 has biased composition (low complexity); sequence SSSGSTPSTDNST. Residues 222–236 show a composition bias toward polar residues; that stretch reads SEATQPLTSQTPGIT. N-linked (GlcNAc...) asparagine glycosylation is present at Asn303. A helical transmembrane segment spans residues 405 to 425; the sequence is LPLIITIVCMASFLLLVAALY. Residues 426 to 503 lie on the Cytoplasmic side of the membrane; that stretch reads GCCHQRISQR…DLDEEEDTHL (78 aa). At Thr463 the chain carries Phosphothreonine. The residue at position 482 (Ser482) is a Phosphoserine. A Phosphothreonine modification is found at Thr501.

The protein belongs to the podocalyxin family. In terms of assembly, monomer; when associated with the membrane raft. Oligomer; when integrated in the apical membrane. Found in a complex with EZR, PODXL and NHERF2. Associates with the actin cytoskeleton through complex formation with EZR and NHERF2. Interacts (via the C-terminal PDZ-binding motif DTHL) with NHERF1 (via the PDZ domains); interaction is not detected in glomerular epithelium cells, take place early in the secretory pathway and is necessary for its apical membrane sorting. Interacts (via the C-terminal PDZ-binding motif DTHL) with NHERF2 (via the PDZ 1 domain); interaction is detected in glomerular epithelium cells. Interacts with EZR. Post-translationally, N- and O-linked glycosylated. Sialoglycoprotein. Expressed in liver cells and hematopoietic cells (at protein level). Glomerular epithelium cell (podocyte).

Its subcellular location is the apical cell membrane. It is found in the cell projection. It localises to the microvillus. The protein localises to the membrane raft. The protein resides in the lamellipodium. Its subcellular location is the filopodium. It is found in the ruffle. It localises to the membrane. Its function is as follows. Involved in the regulation of both adhesion and cell morphology and cancer progression. Functions as an anti-adhesive molecule that maintains an open filtration pathway between neighboring foot processes in the podocyte by charge repulsion. Acts as a pro-adhesive molecule, enhancing the adherence of cells to immobilized ligands, increasing the rate of migration and cell-cell contacts in an integrin-dependent manner. Induces the formation of apical actin-dependent microvilli. Involved in the formation of a preapical plasma membrane subdomain to set up initial epithelial polarization and the apical lumen formation during renal tubulogenesis. Plays a role in cancer development and aggressiveness by inducing cell migration and invasion through its interaction with the actin-binding protein EZR. Affects EZR-dependent signaling events, leading to increased activities of the MAPK and PI3K pathways in cancer cells. In Mus musculus (Mouse), this protein is Podocalyxin (Podxl).